Reading from the N-terminus, the 207-residue chain is Glycerol-3-phosphate acyltransferase (207 aa).

The next 6 membrane-spanning stretches (helical) occupy residues Tyr7–Val27, Leu58–Leu78, Val83–Phe103, Leu116–Phe136, Ile141–Gly161, and Leu166–Ile186.

This sequence belongs to the PlsY family. In terms of assembly, probably interacts with PlsX.

Its subcellular location is the cell inner membrane. The catalysed reaction is an acyl phosphate + sn-glycerol 3-phosphate = a 1-acyl-sn-glycero-3-phosphate + phosphate. It participates in lipid metabolism; phospholipid metabolism. Functionally, catalyzes the transfer of an acyl group from acyl-phosphate (acyl-PO(4)) to glycerol-3-phosphate (G3P) to form lysophosphatidic acid (LPA). This enzyme utilizes acyl-phosphate as fatty acyl donor, but not acyl-CoA or acyl-ACP. The polypeptide is Glycerol-3-phosphate acyltransferase (Hyphomonas neptunium (strain ATCC 15444)).